We begin with the raw amino-acid sequence, 600 residues long: Threonine dehydratase, mitochondrial (600 aa).

Lys144 carries the post-translational modification N6-(pyridoxal phosphate)lysine. 2 consecutive ACT-like domains span residues 425–497 and 519–590; these read VFLS…DISD and RLYR…DETN.

Belongs to the serine/threonine dehydratase family. As to quaternary structure, homotetramer. Pyridoxal 5'-phosphate is required as a cofactor.

The protein localises to the mitochondrion. It is found in the cytoplasm. It carries out the reaction L-threonine = 2-oxobutanoate + NH4(+). It participates in amino-acid biosynthesis; L-isoleucine biosynthesis; 2-oxobutanoate from L-threonine: step 1/1. Its activity is regulated as follows. Isoleucine allosterically inhibits while valine allosterically activates this enzyme. The protein is Threonine dehydratase, mitochondrial of Schizosaccharomyces pombe (strain 972 / ATCC 24843) (Fission yeast).